The sequence spans 144 residues: Large ribosomal subunit protein uL15 (144 aa).

Positions 1-62 (MELNNLKPAE…GQMPLQRRLP (62 aa)) are disordered. Residues 21 to 31 (RGIGSGLGKTA) show a composition bias toward gly residues.

Belongs to the universal ribosomal protein uL15 family. As to quaternary structure, part of the 50S ribosomal subunit.

Its function is as follows. Binds to the 23S rRNA. This Paraburkholderia phymatum (strain DSM 17167 / CIP 108236 / LMG 21445 / STM815) (Burkholderia phymatum) protein is Large ribosomal subunit protein uL15.